The following is a 127-amino-acid chain: MARISGVDLPRDKRVEIGLTYLYGIGLSRSQEILAETGVNPDTRVRDLSDEDVAKLRAYIENNYQIEGDLRRWEAMNIKRLADIGTYRGRRHRQGLPVRGQRTRTNGRTRRGRRVTVAGKKKAPAKK.

The interval 93 to 127 (RQGLPVRGQRTRTNGRTRRGRRVTVAGKKKAPAKK) is disordered. Over residues 101 to 127 (QRTRTNGRTRRGRRVTVAGKKKAPAKK) the composition is skewed to basic residues.

It belongs to the universal ribosomal protein uS13 family. In terms of assembly, part of the 30S ribosomal subunit. Forms a loose heterodimer with protein S19. Forms two bridges to the 50S subunit in the 70S ribosome.

In terms of biological role, located at the top of the head of the 30S subunit, it contacts several helices of the 16S rRNA. In the 70S ribosome it contacts the 23S rRNA (bridge B1a) and protein L5 of the 50S subunit (bridge B1b), connecting the 2 subunits; these bridges are implicated in subunit movement. Contacts the tRNAs in the A and P-sites. The polypeptide is Small ribosomal subunit protein uS13 (Crocosphaera subtropica (strain ATCC 51142 / BH68) (Cyanothece sp. (strain ATCC 51142))).